A 162-amino-acid polypeptide reads, in one-letter code: Selenoprotein F (162 aa).

A signal peptide spans methionine 1–alanine 28. Residue selenocysteine 93 is a non-standard amino acid, selenocysteine.

This sequence belongs to the selenoprotein M/F family. Forms a tight complex with UGGT1/UGCGL1. Interacts with UGGT2/UGCGL2. Interacts with RDH11.

It is found in the endoplasmic reticulum lumen. In terms of biological role, may be involved in redox reactions associated with the formation of disulfide bonds. May contribute to the quality control of protein folding in the endoplasmic reticulum. May regulate protein folding by enhancing the catalytic activity of UGGT1/UGCGL1 and UGGT2/UGCGL2. This chain is Selenoprotein F, found in Sus scrofa (Pig).